The chain runs to 315 residues: 4-hydroxy-3-methylbut-2-enyl diphosphate reductase (315 aa).

Cys12 lines the [4Fe-4S] cluster pocket. (2E)-4-hydroxy-3-methylbut-2-enyl diphosphate-binding residues include His41 and His74. Residues His41 and His74 each contribute to the dimethylallyl diphosphate site. 2 residues coordinate isopentenyl diphosphate: His41 and His74. Cys96 lines the [4Fe-4S] cluster pocket. (2E)-4-hydroxy-3-methylbut-2-enyl diphosphate is bound at residue His124. His124 contributes to the dimethylallyl diphosphate binding site. His124 serves as a coordination point for isopentenyl diphosphate. The active-site Proton donor is Glu126. Position 168 (Thr168) interacts with (2E)-4-hydroxy-3-methylbut-2-enyl diphosphate. Position 198 (Cys198) interacts with [4Fe-4S] cluster. Residues Ser226, Ser227, Asn228, and Ser270 each contribute to the (2E)-4-hydroxy-3-methylbut-2-enyl diphosphate site. Dimethylallyl diphosphate contacts are provided by Ser226, Ser227, Asn228, and Ser270. Ser226, Ser227, Asn228, and Ser270 together coordinate isopentenyl diphosphate.

Belongs to the IspH family. [4Fe-4S] cluster serves as cofactor.

The enzyme catalyses isopentenyl diphosphate + 2 oxidized [2Fe-2S]-[ferredoxin] + H2O = (2E)-4-hydroxy-3-methylbut-2-enyl diphosphate + 2 reduced [2Fe-2S]-[ferredoxin] + 2 H(+). It catalyses the reaction dimethylallyl diphosphate + 2 oxidized [2Fe-2S]-[ferredoxin] + H2O = (2E)-4-hydroxy-3-methylbut-2-enyl diphosphate + 2 reduced [2Fe-2S]-[ferredoxin] + 2 H(+). The protein operates within isoprenoid biosynthesis; dimethylallyl diphosphate biosynthesis; dimethylallyl diphosphate from (2E)-4-hydroxy-3-methylbutenyl diphosphate: step 1/1. It participates in isoprenoid biosynthesis; isopentenyl diphosphate biosynthesis via DXP pathway; isopentenyl diphosphate from 1-deoxy-D-xylulose 5-phosphate: step 6/6. Catalyzes the conversion of 1-hydroxy-2-methyl-2-(E)-butenyl 4-diphosphate (HMBPP) into a mixture of isopentenyl diphosphate (IPP) and dimethylallyl diphosphate (DMAPP). Acts in the terminal step of the DOXP/MEP pathway for isoprenoid precursor biosynthesis. This is 4-hydroxy-3-methylbut-2-enyl diphosphate reductase from Pseudomonas putida (strain ATCC 700007 / DSM 6899 / JCM 31910 / BCRC 17059 / LMG 24140 / F1).